The following is a 305-amino-acid chain: DNA-directed RNA polymerase 35 kDa subunit (305 aa).

This sequence belongs to the poxviridae DNA-directed RNA polymerase 35 kDa subunit family. In terms of assembly, the DNA-dependent RNA polymerase used for intermediate and late genes expression consists of eight subunits 147 kDa, 133 kDa, 35 kDa, 30 kDa, 22 kDa, 19 kDa, 18 kDa and 7 kDa totalling more than 500 kDa in mass. The same holoenzyme, with the addition of the transcription-specificity factor RAP94, is used for early gene expression.

The protein localises to the virion. The catalysed reaction is RNA(n) + a ribonucleoside 5'-triphosphate = RNA(n+1) + diphosphate. Its function is as follows. Part of the DNA-dependent RNA polymerase which catalyzes the transcription of viral DNA into RNA using the four ribonucleoside triphosphates as substrates. Responsible for the transcription of early, intermediate and late genes. DNA-dependent RNA polymerase associates with the early transcription factor (ETF), itself composed of D6 and A7, thereby allowing the early genes transcription. Late transcription, and probably also intermediate transcription, require newly synthesized RNA polymerase. This is DNA-directed RNA polymerase 35 kDa subunit (OPG156) from Cynomys gunnisoni (Gunnison's prairie dog).